The following is a 160-amino-acid chain: Nucleotide-binding protein Noc_2254 (160 aa).

The protein belongs to the YajQ family.

In terms of biological role, nucleotide-binding protein. This chain is Nucleotide-binding protein Noc_2254, found in Nitrosococcus oceani (strain ATCC 19707 / BCRC 17464 / JCM 30415 / NCIMB 11848 / C-107).